An 816-amino-acid chain; its full sequence is Mitogen-activated protein kinase 7 (816 aa).

The interval 1 to 26 (MAEPLKEEDGEDGSAEPPGPVKAEPA) is disordered. N-acetylalanine is present on Ala-2. A required for cytoplasmic targeting region spans residues 2-77 (AEPLKEEDGE…VVSSARRRLT (76 aa)). The 293-residue stretch at 55–347 (YEIIETIGNG…AAAALRHPFL (293 aa)) folds into the Protein kinase domain. ATP-binding positions include 61–69 (IGNGAYGVV) and Lys-84. Residues 78-139 (GQQVAIKKIP…FKSVYVVLDL (62 aa)) are required for binding to MAP2K5. Residues 140–406 (MESDLHQIIH…QQIRFQPSLQ (267 aa)) form a necessary for oligomerization region. Asp-182 functions as the Proton acceptor in the catalytic mechanism. Residues 219-221 (TEY) carry the TXY motif. A disordered region spans residues 406–737 (QPVASEPGCP…PVFSGTPKGS (332 aa)). The segment at 407-806 (PVASEPGCPD…REIQMDSPML (400 aa)) is may not be required for kinase activity; required to stimulate MEF2C activity. Composition is skewed to pro residues over residues 433–445 (SPPP…PGPA) and 454–463 (QPPPPVSEPA). Over residues 476–486 (KAALKAALLKS) the composition is skewed to low complexity. Composition is skewed to basic and acidic residues over residues 502–519 (PEPR…EREE), 527–544 (RAKE…KERG), and 563–573 (DNDRSLLERWT). Residues 505 to 539 (RKPVTAQERQREREEKRRRRQERAKEREKRRQERE) carry the Nuclear localization signal motif. Residues 578-587 (PAAPALTSVP) show a composition bias toward low complexity. Composition is skewed to pro residues over residues 588–610 (APAP…PGPV) and 628–655 (VPQP…PAPP). Positions 676 to 685 (PGSSTPGVLP) are enriched in low complexity. The span at 686–695 (YFPPGLPPPD) shows a compositional bias: pro residues. Positions 701–720 (QSSMSESPDVNLVTQQLSKS) are enriched in polar residues. The residue at position 720 (Ser-720) is a Phosphoserine. Thr-733 carries the phosphothreonine modification.

The protein belongs to the protein kinase superfamily. CMGC Ser/Thr protein kinase family. MAP kinase subfamily. In terms of assembly, interacts with MAP2K5. Forms oligomers. Interacts with MEF2A, MEF2C and MEF2D; the interaction phosphorylates the MEF2s and enhances transcriptional activity of MEF2A, MEF2C but not MEF2D. Interacts with SGK1. Preferentially interacts with PML isoform PML-4 but shows interaction also with its other isoforms: isoform PML-1, isoform PML-2, isoform PML-3 and isoform PML-6. Interacts (via N-terminal half) with HSP90AB1-CDC37 chaperone complex in resting cells; the interaction is MAP2K5-independent and prevents MAPK7 from ubiquitination and proteasomal degradation. Interacts with STUB1/CHIP; the interaction is enhanced in the presence of IGF1 or MAP2K5 and promotes STUB1/CHIP E3 ligase activity. Mg(2+) serves as cofactor. Dually phosphorylated on Thr-219 and Tyr-221, which activates the enzyme. Autophosphorylated in vitro on threonine and tyrosine residues when the C-terminal part of the kinase, which could have a regulatory role, is absent. As to expression, expressed in many adult tissues. Abundant in heart, placenta, lung, kidney and skeletal muscle. Not detectable in liver.

It is found in the cytoplasm. The protein resides in the nucleus. The protein localises to the PML body. It carries out the reaction L-seryl-[protein] + ATP = O-phospho-L-seryl-[protein] + ADP + H(+). It catalyses the reaction L-threonyl-[protein] + ATP = O-phospho-L-threonyl-[protein] + ADP + H(+). Activated by tyrosine and threonine phosphorylation. Activated in response to hyperosmolarity, hydrogen peroxide, and epidermal growth factor (EGF). Its function is as follows. Plays a role in various cellular processes such as proliferation, differentiation and cell survival. The upstream activator of MAPK7 is the MAPK kinase MAP2K5. Upon activation, it translocates to the nucleus and phosphorylates various downstream targets including MEF2C. EGF activates MAPK7 through a Ras-independent and MAP2K5-dependent pathway. As part of the MAPK/ERK signaling pathway, acts as a negative regulator of apoptosis in cardiomyocytes via interaction with STUB1/CHIP and promotion of STUB1-mediated ubiquitination and degradation of ICER-type isoforms of CREM. May have a role in muscle cell differentiation. May be important for endothelial function and maintenance of blood vessel integrity. MAP2K5 and MAPK7 interact specifically with one another and not with MEK1/ERK1 or MEK2/ERK2 pathways. Phosphorylates SGK1 at Ser-78 and this is required for growth factor-induced cell cycle progression. Involved in the regulation of p53/TP53 by disrupting the PML-MDM2 interaction. This is Mitogen-activated protein kinase 7 (MAPK7) from Homo sapiens (Human).